Reading from the N-terminus, the 445-residue chain is Dolichyl-diphosphooligosaccharide--protein glycosyltransferase 48 kDa subunit (445 aa).

The N-terminal stretch at 1 to 20 is a signal peptide; sequence MRWLPGLLLIASIGFHQSLA. The Lumenal portion of the chain corresponds to 21-405; it reads DRVLVLGETA…YERFIRSAYP (385 aa). Residues 406 to 426 traverse the membrane as a helical segment; it reads YYASSFSMMAGLVLFSIVYLY. Residues 427-445 lie on the Cytoplasmic side of the membrane; the sequence is HKDTPVKGAKVLDSEKKKN.

It belongs to the DDOST 48 kDa subunit family. In terms of assembly, component of the oligosaccharyltransferase (OST) complex.

Its subcellular location is the endoplasmic reticulum membrane. Its pathway is protein modification; protein glycosylation. Subunit of the oligosaccharyl transferase (OST) complex that catalyzes the initial transfer of a defined glycan (Glc(3)Man(9)GlcNAc(2) in eukaryotes) from the lipid carrier dolichol-pyrophosphate to an asparagine residue within an Asn-X-Ser/Thr consensus motif in nascent polypeptide chains, the first step in protein N-glycosylation. N-glycosylation occurs cotranslationally and the complex associates with the Sec61 complex at the channel-forming translocon complex that mediates protein translocation across the endoplasmic reticulum (ER). All subunits are required for a maximal enzyme activity. Required for the assembly of both SST3A- and SS3B-containing OST complexes. Required for normal lifespan. This Caenorhabditis elegans protein is Dolichyl-diphosphooligosaccharide--protein glycosyltransferase 48 kDa subunit.